Consider the following 336-residue polypeptide: Ornithine carbamoyltransferase, catabolic (336 aa).

Carbamoyl phosphate-binding positions include 62-65 (STRT), Gln89, Arg113, and 140-143 (HPTQ). L-ornithine-binding positions include Asn172, Asp236, and 240–241 (SM). Carbamoyl phosphate is bound by residues 277–278 (CL) and Arg322.

It belongs to the aspartate/ornithine carbamoyltransferase superfamily. OTCase family.

It is found in the cytoplasm. It catalyses the reaction carbamoyl phosphate + L-ornithine = L-citrulline + phosphate + H(+). Its pathway is amino-acid degradation; L-arginine degradation via ADI pathway; carbamoyl phosphate from L-arginine: step 2/2. Its function is as follows. Reversibly catalyzes the transfer of the carbamoyl group from carbamoyl phosphate (CP) to the N(epsilon) atom of ornithine (ORN) to produce L-citrulline. In Staphylococcus aureus (strain MSSA476), this protein is Ornithine carbamoyltransferase, catabolic.